The following is a 1273-amino-acid chain: MPAVERNAPFTKTFIRKPGQRNDTSIPLHTEAPPPLRQPTRIARAKTLTRPERSQPQVPLINPSSGGPGFSAASRSKHRFSWWTAFSLFVTFWAPSPLLSSCCGLKDKQSRQAWREKVSLVFIAILLGGFIGFITMGLNAALCPSASSHSPNTYSRIGTGGAILGVHGWAFDIAQAHHLPEAPALFSLSTSRPGSDISSLFARSTSDQSPACRGTTAAYAADASCVALNGTLLKDCPLGPLSPATFAQYGMYNQTRKIGYGWEDVESANFSNFLVLDGVVLNMSPYLKANPSPIAADVVDLAIRQQLATSPHRGRDATITFYTNPTTRNAIKCLTQKYVAGYIDKITPGCFISNLVLYCSLVVILAIVLIRFFMAVWFAWFMAGRMSSPPRPSRRRRLAPNVLPEGAMISLNSSGAAPWANKQRPPPSQPARRRRDSAQSATPSVPDSLSVHHIGDEPYVVCLVTAYSENEEGISTTLTSLSETHYSDQRKLLFVVADGMVTGSGESMSTPDVCVSLLEADPRFGTPIPMSFVSIASGKKEHNMAMVYAGHYTRATGRRTPMVVVVKCGAPEEAADSKPGNRGKRDSQMILMNFFQRVTYNDRMTPLDYDLFRKVHTLMGVTPDFFELCLMVDADTMVYPKSMKTLTNCMMRDPMIMGACGETRIANKTQSWVTMIQVYEYFISHHQAKAFESVFGGVTCLPGCFSMYRIKARKQTDDDWVPIIVKPEVTREYSQSVVTTLHQKNLLLLGEDRFLTTTLLRTFPNRKMVFCPEARCKTEVPHTFKMLLSQRRRWINSTIHNLMELVLVRDLCGTFCFSMQFVVFMDLLGTAVLPISIALTYTLVVTYCLNPPHSFTEAIPLMLLVAVIGMPALLILLATRKVVYVLWMLIYLLALPVWNFVLPVYSFWHFDDFSWGETRKVEGEAKQTGHGDEGGSATGNAVPLRRWEDWERSRLRKKKREEKRRRELERQFGSGFHNDNASDGDPDRKEAGMPLSRPGSDSFSDSVTVSDFDDDKWGNQIGGYDETLPPPVQIVRHSVWIGDQEVIIDTEDMEKMLETGWDDKAFRARNLSSASSTNALLQAQQPQYPSAVNRNRLSQMGAFATKRDAPAVPEIPARYSMYVQNNGGGRPANGHGNSNGHYEPGSYEMERTPSPGEYASLIRGGAPSPCSPGFGPAQPYGHSSAVSGGAGQYSTGSHARQRSGGANAAYNQPHQHPPQPSQPPQPPQPAQPTRPGGAPAAPPRGAGSQGSGFAGARPSNPTGRGRSYHDRFS.

The segment at 1–69 is disordered; it reads MPAVERNAPF…LINPSSGGPG (69 aa). The Cytoplasmic segment spans residues 1-79; the sequence is MPAVERNAPF…FSAASRSKHR (79 aa). Residues 80–100 form a helical membrane-spanning segment; that stretch reads FSWWTAFSLFVTFWAPSPLLS. At 101–117 the chain is on the extracellular side; the sequence is SCCGLKDKQSRQAWREK. The chain crosses the membrane as a helical span at residues 118–138; it reads VSLVFIAILLGGFIGFITMGL. At 139–360 the chain is on the cytoplasmic side; the sequence is NAALCPSASS…FISNLVLYCS (222 aa). A helical membrane pass occupies residues 361–381; it reads LVVILAIVLIRFFMAVWFAWF. The Extracellular segment spans residues 382–820; sequence MAGRMSSPPR…LCGTFCFSMQ (439 aa). N412 is a glycosylation site (N-linked (GlcNAc...) asparagine). The interval 416-451 is disordered; it reads AAPWANKQRPPPSQPARRRRDSAQSATPSVPDSLSV. 2 N-linked (GlcNAc...) asparagine glycosylation sites follow: N667 and N796. The helical transmembrane segment at 821–841 threads the bilayer; the sequence is FVVFMDLLGTAVLPISIALTY. The Cytoplasmic portion of the chain corresponds to 842-857; sequence TLVVTYCLNPPHSFTE. Residues 858–878 traverse the membrane as a helical segment; the sequence is AIPLMLLVAVIGMPALLILLA. At 879-881 the chain is on the extracellular side; the sequence is TRK. A helical transmembrane segment spans residues 882–902; the sequence is VVYVLWMLIYLLALPVWNFVL. At 903 to 1273 the chain is on the cytoplasmic side; that stretch reads PVYSFWHFDD…RGRSYHDRFS (371 aa). Disordered stretches follow at residues 966-1009 and 1126-1273; these read RELE…SVTV and NGGG…DRFS. Residues 1000-1009 are compositionally biased toward low complexity; sequence SDSFSDSVTV. Residues 1215–1232 are compositionally biased toward pro residues; sequence QHPPQPSQPPQPPQPAQP. Positions 1233-1246 are enriched in low complexity; the sequence is TRPGGAPAAPPRGA.

Belongs to the chitin synthase family. Class IV subfamily.

It localises to the cell membrane. The protein resides in the cytoplasmic vesicle membrane. The enzyme catalyses [(1-&gt;4)-N-acetyl-beta-D-glucosaminyl](n) + UDP-N-acetyl-alpha-D-glucosamine = [(1-&gt;4)-N-acetyl-beta-D-glucosaminyl](n+1) + UDP + H(+). Polymerizes chitin, a structural polymer of the cell wall and septum, by transferring the sugar moiety of UDP-GlcNAc to the non-reducing end of the growing chitin polymer. This chain is Chitin synthase 7, found in Mycosarcoma maydis (Corn smut fungus).